Consider the following 171-residue polypeptide: 3-hydroxydecanoyl-[acyl-carrier-protein] dehydratase (171 aa).

Residue histidine 71 is part of the active site.

It belongs to the thioester dehydratase family. FabA subfamily. Homodimer.

The protein resides in the cytoplasm. It catalyses the reaction a (3R)-hydroxyacyl-[ACP] = a (2E)-enoyl-[ACP] + H2O. The catalysed reaction is (3R)-hydroxydecanoyl-[ACP] = (2E)-decenoyl-[ACP] + H2O. It carries out the reaction (2E)-decenoyl-[ACP] = (3Z)-decenoyl-[ACP]. It functions in the pathway lipid metabolism; fatty acid biosynthesis. Necessary for the introduction of cis unsaturation into fatty acids. Catalyzes the dehydration of (3R)-3-hydroxydecanoyl-ACP to E-(2)-decenoyl-ACP and then its isomerization to Z-(3)-decenoyl-ACP. Can catalyze the dehydratase reaction for beta-hydroxyacyl-ACPs with saturated chain lengths up to 16:0, being most active on intermediate chain length. This Rhizobium rhizogenes (strain K84 / ATCC BAA-868) (Agrobacterium radiobacter) protein is 3-hydroxydecanoyl-[acyl-carrier-protein] dehydratase.